The following is a 485-amino-acid chain: Glutamate--tRNA ligase (485 aa).

A 'HIGH' region motif is present at residues 12 to 22 (PSPTGEPHVGT). A 'KMSKS' region motif is present at residues 253–257 (KLSKR). An ATP-binding site is contributed by Lys-256.

The protein belongs to the class-I aminoacyl-tRNA synthetase family. Glutamate--tRNA ligase type 1 subfamily. Monomer.

It localises to the cytoplasm. The catalysed reaction is tRNA(Glu) + L-glutamate + ATP = L-glutamyl-tRNA(Glu) + AMP + diphosphate. In terms of biological role, catalyzes the attachment of glutamate to tRNA(Glu) in a two-step reaction: glutamate is first activated by ATP to form Glu-AMP and then transferred to the acceptor end of tRNA(Glu). This chain is Glutamate--tRNA ligase, found in Sinorhizobium medicae (strain WSM419) (Ensifer medicae).